We begin with the raw amino-acid sequence, 101 residues long: Small ribosomal subunit protein uS14A (101 aa).

2 stretches are compositionally biased toward basic and acidic residues: residues K28–A44 and R61–P70. Positions K28–L74 are disordered.

The protein belongs to the universal ribosomal protein uS14 family. In terms of assembly, part of the 30S ribosomal subunit. Contacts proteins S3 and S10.

In terms of biological role, binds 16S rRNA, required for the assembly of 30S particles and may also be responsible for determining the conformation of the 16S rRNA at the A site. This Rhodococcus jostii (strain RHA1) protein is Small ribosomal subunit protein uS14A.